The primary structure comprises 282 residues: Phosphatidylglycerol--prolipoprotein diacylglyceryl transferase (282 aa).

4 helical membrane passes run 23 to 43 (IGPLAIHWYGLAYVAGILLGW), 71 to 91 (FIVWAALGVVLGGRLGYIFFY), 106 to 126 (IWNGGMSFHGGLTGTTIAMII), and 132 to 152 (GIPIWSLFDIVATVVPFGLFF). R154 contributes to the a 1,2-diacyl-sn-glycero-3-phospho-(1'-sn-glycerol) binding site. 3 helical membrane-spanning segments follow: residues 189–209 (LYEAGLEGIVLLLVLAALVYG), 217–237 (GFITGVFVCGYALSRIFVEFF), and 252–272 (WLTMGMVLSSPMILLGLWAML).

Belongs to the Lgt family.

It is found in the cell inner membrane. It carries out the reaction L-cysteinyl-[prolipoprotein] + a 1,2-diacyl-sn-glycero-3-phospho-(1'-sn-glycerol) = an S-1,2-diacyl-sn-glyceryl-L-cysteinyl-[prolipoprotein] + sn-glycerol 1-phosphate + H(+). It functions in the pathway protein modification; lipoprotein biosynthesis (diacylglyceryl transfer). In terms of biological role, catalyzes the transfer of the diacylglyceryl group from phosphatidylglycerol to the sulfhydryl group of the N-terminal cysteine of a prolipoprotein, the first step in the formation of mature lipoproteins. The chain is Phosphatidylglycerol--prolipoprotein diacylglyceryl transferase from Rhizobium leguminosarum bv. trifolii (strain WSM2304).